Consider the following 226-residue polypeptide: Putative ABC transporter ATP-binding protein BQ02700 (226 aa).

Residues 4 to 225 (IKFDKVTQVF…VAIKEYIRRM (222 aa)) form the ABC transporter domain. 35 to 42 (GANGSGKS) is a binding site for ATP.

This sequence belongs to the ABC transporter superfamily.

It is found in the cell inner membrane. In terms of biological role, probably part of an ABC transporter complex. Responsible for energy coupling to the transport system. The sequence is that of Putative ABC transporter ATP-binding protein BQ02700 from Bartonella quintana (strain Toulouse) (Rochalimaea quintana).